An 856-amino-acid chain; its full sequence is Translation initiation factor IF-2 (856 aa).

Residues 356–526 (PRAPVVTVMG…LLIADLLELK (171 aa)) form the tr-type G domain. The interval 365 to 372 (GHVDHGKT) is G1. 365–372 (GHVDHGKT) contributes to the GTP binding site. The interval 390 to 394 (GITQH) is G2. Residues 412–415 (DTPG) form a G3 region. GTP is bound by residues 412-416 (DTPGH) and 466-469 (NKID). The interval 466-469 (NKID) is G4. The tract at residues 502–504 (SAK) is G5.

This sequence belongs to the TRAFAC class translation factor GTPase superfamily. Classic translation factor GTPase family. IF-2 subfamily.

Its subcellular location is the cytoplasm. Functionally, one of the essential components for the initiation of protein synthesis. Protects formylmethionyl-tRNA from spontaneous hydrolysis and promotes its binding to the 30S ribosomal subunits. Also involved in the hydrolysis of GTP during the formation of the 70S ribosomal complex. The chain is Translation initiation factor IF-2 from Ehrlichia ruminantium (strain Gardel).